A 358-amino-acid polypeptide reads, in one-letter code: Branched-chain amino acid aminotransferase gloG (358 aa).

Position 91 (Arg91) interacts with pyridoxal 5'-phosphate. The Proton acceptor role is filled by Lys195. Lys195 is subject to N6-(pyridoxal phosphate)lysine. Pyridoxal 5'-phosphate is bound at residue Glu231.

Belongs to the class-IV pyridoxal-phosphate-dependent aminotransferase family. Pyridoxal 5'-phosphate is required as a cofactor.

It catalyses the reaction L-isoleucine + 2-oxoglutarate = (S)-3-methyl-2-oxopentanoate + L-glutamate. It carries out the reaction L-leucine + 2-oxoglutarate = 4-methyl-2-oxopentanoate + L-glutamate. The enzyme catalyses L-valine + 2-oxoglutarate = 3-methyl-2-oxobutanoate + L-glutamate. It participates in mycotoxin biosynthesis. Functionally, branched-chain amino acid aminotransferase; part of the gene cluster that mediates the biosynthesis of pneumocandins, lipohexapeptides of the echinocandin family that prevent fungal cell wall formation by non-competitive inhibition of beta-1,3-glucan synthase. The 10,12-dimethylmyristoyl side chain is synthesized by the reducing polyketide synthase gloL/GLPKS4. The thioesterase gloN/GLHYD exclusively interacts with gloL/GLPKS4 to maintain turnover of the polyketide side chain. The 10R,12S-dimethylmyristic acid is then transferred to the first thiolation domain of the nonribosomal peptide synthetase gloA/GLNRPS4 by the acyl-AMP ligase gloD/GLligase, followed by its acylation to L-ornithine to trigger elongation of the cyclic hexapeptide. L-ornithine, 4R-hydroxyl-L-proline (generated from L-proline by the dioxygenase gloF/GLOXY2), 3S-hydroxyl-L-homotyrosine (generated by gloG/GLHtyB, gloH/GLHtyA, gloI/GLHtyC, gloJ/GLHtyD and hydroxylated at C-3 by the dioxygenase gloM/GLOXY1), 3R-hydroxyl-L-glutamine (generated from L-glutamine probably by the dioxygenase gloE/GLOXY3) and 3S-hydroxyl-L-proline (generated from L-proline by the dioxygenase gloF/GLOXY2 to yield pneumocandin B0), or 3S-hydroxyl-4S-methyl-L-proline (generated from L-leucine by the dioxygenase gloC/GLOXY4 to yield pneumocandin A0) are sequentially added to the growing chain. The last C domain of gloA/GLNRPS4 is proposed to be responsible for cyclization by condensation to form the peptide bond between L-ornithine and 3S-hydroxyl-4S-methyl-L-proline (for pneumocandin A0) or 3S-hydroxyl-L-proline (for pneumocandin B0). Finally, the subsequent C-4 hydroxylation of 3S-hydroxyl-L-homotyrosine and L-ornithine dihydroxylation at C-4 and C-5 are performed by the cytochrome P450 monooxygenases gloP/GLP450-1 and gloO/GLP450-2, respectively. The protein is Branched-chain amino acid aminotransferase gloG of Glarea lozoyensis (strain ATCC 20868 / MF5171).